A 324-amino-acid chain; its full sequence is uncharacterized protein (324 aa).

It belongs to the mgp1/MG371 family.

This is an uncharacterized protein from Mycoplasma genitalium (strain ATCC 33530 / DSM 19775 / NCTC 10195 / G37) (Mycoplasmoides genitalium).